Reading from the N-terminus, the 83-residue chain is Cytochrome c oxidase subunit 7A2, mitochondrial (83 aa).

A mitochondrion-targeting transit peptide spans 1 to 23 (MLRNVLALRQIAQRTISTTSRRH). At 24–48 (FENKVPEKQKLFQEDNGMPVHLKGG) the chain is on the mitochondrial matrix side. Position 33 is an N6-acetyllysine (Lys-33). A helical membrane pass occupies residues 49 to 77 (TSDALLYRATMLLTVGGTAYAIYMLAMAA). Over 78 to 83 (FPKKQN) the chain is Mitochondrial intermembrane.

Belongs to the cytochrome c oxidase VIIa family. As to quaternary structure, component of the cytochrome c oxidase (complex IV, CIV), a multisubunit enzyme composed of 14 subunits. The complex is composed of a catalytic core of 3 subunits MT-CO1, MT-CO2 and MT-CO3, encoded in the mitochondrial DNA, and 11 supernumerary subunits COX4I, COX5A, COX5B, COX6A, COX6B, COX6C, COX7A, COX7B, COX7C, COX8 and NDUFA4, which are encoded in the nuclear genome. The complex exists as a monomer or a dimer and forms supercomplexes (SCs) in the inner mitochondrial membrane with NADH-ubiquinone oxidoreductase (complex I, CI) and ubiquinol-cytochrome c oxidoreductase (cytochrome b-c1 complex, complex III, CIII), resulting in different assemblies (supercomplex SCI(1)III(2)IV(1) and megacomplex MCI(2)III(2)IV(2)). Interacts with PET100.

It is found in the mitochondrion inner membrane. It functions in the pathway energy metabolism; oxidative phosphorylation. Component of the cytochrome c oxidase, the last enzyme in the mitochondrial electron transport chain which drives oxidative phosphorylation. The respiratory chain contains 3 multisubunit complexes succinate dehydrogenase (complex II, CII), ubiquinol-cytochrome c oxidoreductase (cytochrome b-c1 complex, complex III, CIII) and cytochrome c oxidase (complex IV, CIV), that cooperate to transfer electrons derived from NADH and succinate to molecular oxygen, creating an electrochemical gradient over the inner membrane that drives transmembrane transport and the ATP synthase. Cytochrome c oxidase is the component of the respiratory chain that catalyzes the reduction of oxygen to water. Electrons originating from reduced cytochrome c in the intermembrane space (IMS) are transferred via the dinuclear copper A center (CU(A)) of subunit 2 and heme A of subunit 1 to the active site in subunit 1, a binuclear center (BNC) formed by heme A3 and copper B (CU(B)). The BNC reduces molecular oxygen to 2 water molecules using 4 electrons from cytochrome c in the IMS and 4 protons from the mitochondrial matrix. This Rattus norvegicus (Rat) protein is Cytochrome c oxidase subunit 7A2, mitochondrial (Cox7a2).